Consider the following 98-residue polypeptide: Small ribosomal subunit protein uS17 (98 aa).

This sequence belongs to the universal ribosomal protein uS17 family. As to quaternary structure, part of the 30S ribosomal subunit.

One of the primary rRNA binding proteins, it binds specifically to the 5'-end of 16S ribosomal RNA. This is Small ribosomal subunit protein uS17 from Mesomycoplasma hyopneumoniae (strain 232) (Mycoplasma hyopneumoniae).